Consider the following 309-residue polypeptide: GTP cyclohydrolase MptA (309 aa).

It belongs to the GTP cyclohydrolase IV family. Homodimer. It depends on Fe(2+) as a cofactor.

The enzyme catalyses GTP + H2O = 7,8-dihydroneopterin 2',3'-cyclic phosphate + formate + diphosphate + H(+). It participates in cofactor biosynthesis; 5,6,7,8-tetrahydromethanopterin biosynthesis. Functionally, converts GTP to 7,8-dihydro-D-neopterin 2',3'-cyclic phosphate, the first intermediate in the biosynthesis of coenzyme methanopterin. This chain is GTP cyclohydrolase MptA, found in Haloarcula marismortui (strain ATCC 43049 / DSM 3752 / JCM 8966 / VKM B-1809) (Halobacterium marismortui).